Consider the following 40-residue polypeptide: GCIPSFGECAWFSGESCCTGICKWVFFTSKFMCRRVWGKD.

Disulfide bonds link Cys2-Cys18, Cys9-Cys22, and Cys17-Cys33.

This sequence belongs to the neurotoxin 19 (CSTX) family. Post-translationally, contains 3 disulfide bonds. As to expression, expressed by the venom gland.

The protein localises to the secreted. Blocks the Nav1.2/SCN2A, Nav1.4/SCN4A, Nav1.5/SCN5A and Nav1.6/SCN8A sodium channels. Shows a slight preference for the Nav1.2 and Nav1.4 channels. Reduces the peak amplitude of the sodium current and negatively shifts the steady-state inactivation process. Does not shift the threshold potential of activation or the voltage corresponding to maximal current. Does not change the reversal potential of the sodium current. May act on site 1 of the receptor. The sequence is that of Mu-thomitoxin-Hme1b from Heriaeus mellotteei (Crab spider).